Reading from the N-terminus, the 212-residue chain is Thiamine-phosphate synthase (212 aa).

4-amino-2-methyl-5-(diphosphooxymethyl)pyrimidine contacts are provided by residues 43–47 (QYRNK) and asparagine 75. Positions 76 and 95 each coordinate Mg(2+). Residue serine 114 coordinates 4-amino-2-methyl-5-(diphosphooxymethyl)pyrimidine. 141–143 (SMT) is a 2-[(2R,5Z)-2-carboxy-4-methylthiazol-5(2H)-ylidene]ethyl phosphate binding site. Lysine 144 lines the 4-amino-2-methyl-5-(diphosphooxymethyl)pyrimidine pocket. Glycine 171 is a binding site for 2-[(2R,5Z)-2-carboxy-4-methylthiazol-5(2H)-ylidene]ethyl phosphate.

The protein belongs to the thiamine-phosphate synthase family. Requires Mg(2+) as cofactor.

The enzyme catalyses 2-[(2R,5Z)-2-carboxy-4-methylthiazol-5(2H)-ylidene]ethyl phosphate + 4-amino-2-methyl-5-(diphosphooxymethyl)pyrimidine + 2 H(+) = thiamine phosphate + CO2 + diphosphate. The catalysed reaction is 2-(2-carboxy-4-methylthiazol-5-yl)ethyl phosphate + 4-amino-2-methyl-5-(diphosphooxymethyl)pyrimidine + 2 H(+) = thiamine phosphate + CO2 + diphosphate. It carries out the reaction 4-methyl-5-(2-phosphooxyethyl)-thiazole + 4-amino-2-methyl-5-(diphosphooxymethyl)pyrimidine + H(+) = thiamine phosphate + diphosphate. The protein operates within cofactor biosynthesis; thiamine diphosphate biosynthesis; thiamine phosphate from 4-amino-2-methyl-5-diphosphomethylpyrimidine and 4-methyl-5-(2-phosphoethyl)-thiazole: step 1/1. Its function is as follows. Condenses 4-methyl-5-(beta-hydroxyethyl)thiazole monophosphate (THZ-P) and 2-methyl-4-amino-5-hydroxymethyl pyrimidine pyrophosphate (HMP-PP) to form thiamine monophosphate (TMP). This Nitrosomonas eutropha (strain DSM 101675 / C91 / Nm57) protein is Thiamine-phosphate synthase.